Reading from the N-terminus, the 196-residue chain is MQNFTVHQGVVATLDRANVDTDQIIPKQFLKRIERTGFGQFLFFDWRFLEDGETENPDFELNRINVKGASILLTRQNFGSGSSREHAVWALDDYGFRAVIAPSFADIFFNNCFKNGVLPIALSEEDVEELFQRAEKGNPYQLTVDLENQVITDGQGFERSFEVDASRRHNMLHGLDDIAQTLLHEDKITAFEEARG.

Belongs to the LeuD family. LeuD type 1 subfamily. In terms of assembly, heterodimer of LeuC and LeuD.

The enzyme catalyses (2R,3S)-3-isopropylmalate = (2S)-2-isopropylmalate. Its pathway is amino-acid biosynthesis; L-leucine biosynthesis; L-leucine from 3-methyl-2-oxobutanoate: step 2/4. Functionally, catalyzes the isomerization between 2-isopropylmalate and 3-isopropylmalate, via the formation of 2-isopropylmaleate. In Rhodopirellula baltica (strain DSM 10527 / NCIMB 13988 / SH1), this protein is 3-isopropylmalate dehydratase small subunit.